Consider the following 400-residue polypeptide: Trans-enoyl reductase ucsL (400 aa).

50–53 (TDHK) is an NADP(+) binding site. 145–152 (SVHGSVAL) contacts substrate. Residues 204-207 (STAC), 227-230 (SPRN), Tyr-245, and 292-293 (LE) each bind NADP(+). 313-317 (GPVMF) is a substrate binding site. 389–390 (VS) contributes to the NADP(+) binding site.

Belongs to the zinc-containing alcohol dehydrogenase family. Monomer.

Its pathway is mycotoxin biosynthesis. In terms of biological role, trans-enoyl reductase; part of the gene cluster that mediates the biosynthesis of UCS1025A, a member of the pyrrolizidinone family that acts as a strong telomerase inhibitor and displays potent antibacterial and antitumor properties. These compounds share a hemiaminal-containing pyrrolizidinone core fused with a gamma-lactone, giving a furopyrrolizidine that is connected to a decalin fragment. The polyketide synthase module (PKS) of the PKS-NRPS ucsA is responsible for the synthesis of the polyketide backbone via the condensation of an acetyl-CoA starter unit with 6 malonyl-CoA units. The downstream nonribosomal peptide synthetase (NRPS) module then amidates the carboxyl end of the polyketide with a 2S,3S-methylproline derived from L-isoleucine by the 2-oxoglutarate-dependent dioxygenase ucsF which converts L-isoleucine to (4S,5S)-4-methylpyrroline-5-carboxylate that is further converted to 2S,3S-methylproline by the pyrroline-5-carboxylate reductase ucsG. Reductive release of the completed aminoacyl polyketide from the assembly line can form the 3-pyrrolin-2-one structure via an intramolecular Knoevenagel reaction. Because ucsA lacks a designated enoylreductase (ER) domain, the required activity is provided the enoyl reductase ucsL. This keto acyclic precursor is the substrate of the Diels-Alderase ucsH, that catalyzes the Diels-Alder cycloaddition. Oxidation of the 3S-methyl group to a carboxylate by the cytochrome P450 monooxygenase ucsK allows an oxa-Michael cyclization that might involve the reductase/dehydrogenase ucsI and which furnishes the furopyrrolizidine. The oxidase ucsJ likely plays a critical role in stereoselective reduction of the C5-C6 double bond to afford the required R-configured carboxylate group. Further enolization and oxidation at C5 by an unidentified enzyme affords the last intermediate that can undergo oxa-Michael cyclization to yield UCS1025A. This is Trans-enoyl reductase ucsL from Acremonium sp.